The primary structure comprises 522 residues: Cytochrome P450 1A1 (522 aa).

F229 lines the substrate pocket. C463 provides a ligand contact to heme.

Belongs to the cytochrome P450 family. Requires heme as cofactor. In terms of tissue distribution, liver.

The protein localises to the endoplasmic reticulum membrane. It is found in the microsome membrane. The catalysed reaction is an organic molecule + reduced [NADPH--hemoprotein reductase] + O2 = an alcohol + oxidized [NADPH--hemoprotein reductase] + H2O + H(+). Functionally, cytochromes P450 are a group of heme-thiolate monooxygenases. They oxidize a variety of structurally unrelated compounds, including steroids, fatty acids, and xenobiotics. This is Cytochrome P450 1A1 (cyp1a1) from Oncorhynchus mykiss (Rainbow trout).